The chain runs to 346 residues: UDP-3-O-acylglucosamine N-acyltransferase (346 aa).

Histidine 253 acts as the Proton acceptor in catalysis.

Belongs to the transferase hexapeptide repeat family. LpxD subfamily. As to quaternary structure, homotrimer.

The enzyme catalyses a UDP-3-O-[(3R)-3-hydroxyacyl]-alpha-D-glucosamine + a (3R)-hydroxyacyl-[ACP] = a UDP-2-N,3-O-bis[(3R)-3-hydroxyacyl]-alpha-D-glucosamine + holo-[ACP] + H(+). It functions in the pathway bacterial outer membrane biogenesis; LPS lipid A biosynthesis. Catalyzes the N-acylation of UDP-3-O-acylglucosamine using 3-hydroxyacyl-ACP as the acyl donor. Is involved in the biosynthesis of lipid A, a phosphorylated glycolipid that anchors the lipopolysaccharide to the outer membrane of the cell. The chain is UDP-3-O-acylglucosamine N-acyltransferase from Rickettsia peacockii (strain Rustic).